The primary structure comprises 700 residues: Myotubularin-related protein 11 (700 aa).

Residues Met1–Ser39 are disordered. One can recognise a Myotubularin phosphatase domain in the interval Leu201–Tyr644.

Belongs to the protein-tyrosine phosphatase family. Non-receptor class myotubularin subfamily.

The protein is Myotubularin-related protein 11 (Mtmr11) of Mus musculus (Mouse).